The primary structure comprises 199 residues: Potassium-transporting ATPase KdpC subunit (199 aa).

Residues 21-43 form a helical membrane-spanning segment; that stretch reads LALLFVCGVVYTGTVTQLGGALF.

Belongs to the KdpC family. The system is composed of three essential subunits: KdpA, KdpB and KdpC.

The protein localises to the cell inner membrane. In terms of biological role, part of the high-affinity ATP-driven potassium transport (or Kdp) system, which catalyzes the hydrolysis of ATP coupled with the electrogenic transport of potassium into the cytoplasm. This subunit acts as a catalytic chaperone that increases the ATP-binding affinity of the ATP-hydrolyzing subunit KdpB by the formation of a transient KdpB/KdpC/ATP ternary complex. The sequence is that of Potassium-transporting ATPase KdpC subunit from Shewanella putrefaciens (strain CN-32 / ATCC BAA-453).